The sequence spans 357 residues: MAKGKRKNPTNRNQDHSPSSERSTPTPPSPGHPNTTENLDPDLKTFLMMMIEDIKKDFHKSLKDLQESTAKELQALKEKQENTAKQVMEMNKTILELKGEVDTIKKTQSEATLEIETLGKRSGTIDASISNRIQEMEERISGAEDSIENIDTTVKENTKCKRILTQNIQVIQDTMRRPNLRIIGIDENEDFQLKGPANIFNKIIEENFPNIKKEMPMIIQEAYRTPNRLDQKRNSSRHIIIRTTNALNKDRILKAVREKGQVTYKGRPIRITPDFSPETMKARRAWTDVIQTLREHKCQPRLLYPAKLSITIDGETKVFHDKTKFTQYLSTNPALQRIITEKKQYKDGNHALEQPRK.

A disordered region spans residues 1 to 40 (MAKGKRKNPTNRNQDHSPSSERSTPTPPSPGHPNTTENLD). Residues 59-156 (HKSLKDLQES…IENIDTTVKE (98 aa)) adopt a coiled-coil conformation. Residues 179 to 274 (NLRIIGIDEN…KGRPIRITPD (96 aa)) form an RNA recognition motif (RRM) domain region. Residues 278–339 (ETMKARRAWT…STNPALQRII (62 aa)) form a C-terminal domain (CTD) region.

Belongs to the transposase 22 family. In terms of assembly, homotrimer (via coiled coil domain). May also form larger homooligomers. Interacts with Tex19.1 and UBR2. Interacts with MOV10. Post-translationally, polyubiquitinated, probably by UBR2, which induces its degradation. As to expression, expressed in meiotic spermatocytes and in the cerebellum (at protein level).

It localises to the nucleus. The protein resides in the nucleolus. Its subcellular location is the cytoplasm. It is found in the cytoplasmic ribonucleoprotein granule. The protein localises to the stress granule. Functionally, nucleic acid-binding protein which is essential for retrotransposition of LINE-1 elements in the genome. Functions as a nucleic acid chaperone binding its own transcript and therefore preferentially mobilizing the transcript from which they are encoded. The protein is LINE-1 retrotransposable element ORF1 protein of Mus musculus (Mouse).